A 206-amino-acid polypeptide reads, in one-letter code: UPF0301 protein Msil_1255 (206 aa).

The protein belongs to the UPF0301 (AlgH) family.

This chain is UPF0301 protein Msil_1255, found in Methylocella silvestris (strain DSM 15510 / CIP 108128 / LMG 27833 / NCIMB 13906 / BL2).